The primary structure comprises 102 residues: Protein ORF28 (102 aa).

Residues 28–48 form a helical membrane-spanning segment; sequence VIGLITVLFLLVIGACVYCCI.

It localises to the host membrane. This chain is Protein ORF28 (ORF28), found in Homo sapiens (Human).